Here is a 309-residue protein sequence, read N- to C-terminus: Protein FdhE (309 aa).

This sequence belongs to the FdhE family.

Its subcellular location is the cytoplasm. Its function is as follows. Necessary for formate dehydrogenase activity. In Salmonella dublin (strain CT_02021853), this protein is Protein FdhE.